We begin with the raw amino-acid sequence, 319 residues long: MVVILDTISANPVRPRHPEKANRPDALSPPKPDWIRVRAPNTRGYANTRRIVKENGLVTVCEEAGCPNIGECWDKKHATFMIMGDTCTRACAFCNVKTGMPGAIESSEPEYVAEATRKLGLAHVVVTSVDRDDLDDGGAEHFAQTIRAIRERCPATTIEILTPDFLRKDGALEKVVAAKPDVFNHNLETVPSRYLTVRPGARYFHSIRLLQRVKEIDPAIFTKSGIMVGLGEERHEVLQVMDDLRSADVDFLTIGQYLQPTRKHHAVIRYVTPEEFSSYETVAYTKGFLMVSASPLTRSSHHAGEDFAKLQAARATLSR.

Residues 5 to 31 are disordered; it reads LDTISANPVRPRHPEKANRPDALSPPK. C61, C66, C72, C87, C91, C94, and S300 together coordinate [4Fe-4S] cluster. One can recognise a Radical SAM core domain in the interval 73-289; sequence WDKKHATFMI…ETVAYTKGFL (217 aa).

It belongs to the radical SAM superfamily. Lipoyl synthase family. It depends on [4Fe-4S] cluster as a cofactor.

Its subcellular location is the cytoplasm. It carries out the reaction [[Fe-S] cluster scaffold protein carrying a second [4Fe-4S](2+) cluster] + N(6)-octanoyl-L-lysyl-[protein] + 2 oxidized [2Fe-2S]-[ferredoxin] + 2 S-adenosyl-L-methionine + 4 H(+) = [[Fe-S] cluster scaffold protein] + N(6)-[(R)-dihydrolipoyl]-L-lysyl-[protein] + 4 Fe(3+) + 2 hydrogen sulfide + 2 5'-deoxyadenosine + 2 L-methionine + 2 reduced [2Fe-2S]-[ferredoxin]. The protein operates within protein modification; protein lipoylation via endogenous pathway; protein N(6)-(lipoyl)lysine from octanoyl-[acyl-carrier-protein]: step 2/2. In terms of biological role, catalyzes the radical-mediated insertion of two sulfur atoms into the C-6 and C-8 positions of the octanoyl moiety bound to the lipoyl domains of lipoate-dependent enzymes, thereby converting the octanoylated domains into lipoylated derivatives. The chain is Lipoyl synthase from Nitrobacter winogradskyi (strain ATCC 25391 / DSM 10237 / CIP 104748 / NCIMB 11846 / Nb-255).